The primary structure comprises 1035 residues: FACT complex subunit SPT16 (1035 aa).

A coiled-coil region spans residues 208-234; the sequence is EELKITNAKLSDKIENKIDDVKFLKQL. The disordered stretch occupies residues 448-496; that stretch reads NNEEEDNNKKKSSPATKVPSKPDRNSKILRTKLRGEARGGAEDAQKEQI. Residues 480-496 show a composition bias toward basic and acidic residues; it reads LRGEARGGAEDAQKEQI. Ser-526 is modified (phosphoserine). Residues 636–666 adopt a coiled-coil conformation; that stretch reads MSETFKQIADLKKEATKREQERKALADVVQQ. The residue at position 765 (Ser-765) is a Phosphoserine. 2 disordered regions span residues 768–796 and 956–1035; these read SVDE…QEQE and GSDD…NFRD. Residues 957-1019 are compositionally biased toward acidic residues; that stretch reads SDDEASDESE…ESEEGEDWDE (63 aa). Residues 959–983 are a coiled coil; the sequence is DEASDESEEEVSEYEASEDDVSDES. The span at 1020 to 1035 shows a compositional bias: basic and acidic residues; sequence LEKKAARADRGANFRD.

It belongs to the peptidase M24 family. SPT16 subfamily. As to quaternary structure, forms a stable heterodimer with POB3. The SPT16-POB3 dimer weakly associates with multiple molecules of NHP6 (NHP6A or NHP6B) to form the FACT (yFACT or SNP) complex. The FACT complex interacts with the CK2 (casein kinase II) complex subunits CKA1, CKA2, CKB1 and CKB2 and the components of the transcription machinery CHD1, CTR9, PAF1 and CDC73. The FACT complex interacts with the PAF1 complex. Interacts with POL1. Interacts with SAS3. Interacts with YTA7.

It is found in the nucleus. It localises to the chromosome. Component of the FACT complex, a general chromatin factor that acts to reorganize nucleosomes. The FACT complex is involved in multiple processes that require DNA as a template such as mRNA elongation, DNA replication and DNA repair. During transcription elongation the FACT complex acts as a histone chaperone that both destabilizes and restores nucleosomal structure. It facilitates the passage of RNA polymerase II and transcription by promoting the dissociation of one histone H2A-H2B dimer from the nucleosome, then subsequently promotes the reestablishment of the nucleosome following the passage of RNA polymerase II. Transcription elongation is promoted by the repression of transcription initiation from cryptic sites. Also acts in establishing transcription initiation complexes and promotes SPT15/TBP-binding to a TATA box. Together with replication factor-A protein (RPA), FACT may play a role in nucleosome deposition during DNA replication. This is FACT complex subunit SPT16 (SPT16) from Saccharomyces cerevisiae (strain ATCC 204508 / S288c) (Baker's yeast).